Here is a 400-residue protein sequence, read N- to C-terminus: Acetate kinase (400 aa).

Position 10 (Asn10) interacts with Mg(2+). Residue Lys17 coordinates ATP. Arg91 contacts substrate. The active-site Proton donor/acceptor is the Asp150. ATP contacts are provided by residues His210–Gly214, Asp285–Arg287, and Gly333–Asn337. Glu387 lines the Mg(2+) pocket.

Belongs to the acetokinase family. Homodimer. Mg(2+) serves as cofactor. Mn(2+) is required as a cofactor.

The protein resides in the cytoplasm. It carries out the reaction acetate + ATP = acetyl phosphate + ADP. The protein operates within metabolic intermediate biosynthesis; acetyl-CoA biosynthesis; acetyl-CoA from acetate: step 1/2. In terms of biological role, catalyzes the formation of acetyl phosphate from acetate and ATP. Can also catalyze the reverse reaction. The protein is Acetate kinase of Yersinia pestis bv. Antiqua (strain Antiqua).